Consider the following 448-residue polypeptide: Tubulin beta chain (448 aa).

The GTP site is built by Gln-11, Glu-69, Ser-138, Gly-142, Thr-143, Gly-144, Asn-204, and Asn-226. Glu-69 is a Mg(2+) binding site. The disordered stretch occupies residues 426–448 (QDAGIDEEEEEYEEEAPVDEPLE). Residues 429–448 (GIDEEEEEYEEEAPVDEPLE) show a composition bias toward acidic residues.

The protein belongs to the tubulin family. As to quaternary structure, dimer of alpha and beta chains. A typical microtubule is a hollow water-filled tube with an outer diameter of 25 nm and an inner diameter of 15 nM. Alpha-beta heterodimers associate head-to-tail to form protofilaments running lengthwise along the microtubule wall with the beta-tubulin subunit facing the microtubule plus end conferring a structural polarity. Microtubules usually have 13 protofilaments but different protofilament numbers can be found in some organisms and specialized cells. Mg(2+) is required as a cofactor.

The protein localises to the cytoplasm. It localises to the cytoskeleton. Its function is as follows. Tubulin is the major constituent of microtubules, a cylinder consisting of laterally associated linear protofilaments composed of alpha- and beta-tubulin heterodimers. Microtubules grow by the addition of GTP-tubulin dimers to the microtubule end, where a stabilizing cap forms. Below the cap, tubulin dimers are in GDP-bound state, owing to GTPase activity of alpha-tubulin. This chain is Tubulin beta chain (TUB2), found in Epichloe coenophiala (Tall fescue endophyte fungus).